Reading from the N-terminus, the 276-residue chain is 3-methyl-2-oxobutanoate hydroxymethyltransferase (276 aa).

2 residues coordinate Mg(2+): Asp-45 and Asp-84. 3-methyl-2-oxobutanoate-binding positions include 45–46 (DS), Asp-84, and Lys-114. Glu-116 provides a ligand contact to Mg(2+). The active-site Proton acceptor is Glu-183.

It belongs to the PanB family. In terms of assembly, homodecamer; pentamer of dimers. Mg(2+) is required as a cofactor.

Its subcellular location is the cytoplasm. It catalyses the reaction 3-methyl-2-oxobutanoate + (6R)-5,10-methylene-5,6,7,8-tetrahydrofolate + H2O = 2-dehydropantoate + (6S)-5,6,7,8-tetrahydrofolate. The protein operates within cofactor biosynthesis; (R)-pantothenate biosynthesis; (R)-pantoate from 3-methyl-2-oxobutanoate: step 1/2. Functionally, catalyzes the reversible reaction in which hydroxymethyl group from 5,10-methylenetetrahydrofolate is transferred onto alpha-ketoisovalerate to form ketopantoate. The protein is 3-methyl-2-oxobutanoate hydroxymethyltransferase of Carboxydothermus hydrogenoformans (strain ATCC BAA-161 / DSM 6008 / Z-2901).